Reading from the N-terminus, the 1580-residue chain is Dynamin-binding protein (1580 aa).

M1 bears the N-acetylmethionine mark. 3 consecutive SH3 domains span residues 2-61 (EPGS…IVTI), 66-127 (EGER…ELCL), and 146-205 (YSLG…LLGP). Disordered stretches follow at residues 211 to 245 (ESVN…DQQS), 304 to 446 (NRTE…LVPL), 500 to 546 (YAQK…DSLD), and 589 to 688 (RGSS…AQTF). Acidic residues predominate over residues 229–243 (VPPEEAESGGDEDDQ). In terms of domain architecture, SH3 4 spans 244 to 303 (QSGTYGIALYRFQALETNELDFEVGDRIQILGTLEDGWLEGCLKGKTGVFPHRFVKLCPS). Composition is skewed to polar residues over residues 422–439 (QKSQ…TSDP) and 502–513 (QKHQTSTENTAS). Positions 516–527 (DPPERPERRPGL) are enriched in basic and acidic residues. Over residues 608–617 (RPPPPRPRTP) the composition is skewed to pro residues. Basic and acidic residues predominate over residues 671-682 (APEKEDSEHMEK). At S683 the chain carries Phosphoserine. Residues 694–755 (LARIRDVEQD…LELQQLRDMT (62 aa)) are a coiled coil. The DH domain maps to 783–970 (KRAKVVAELL…KEINVNINEY (188 aa)). One can recognise a BAR domain in the interval 1011–1220 (LKHLTGFAPQ…LKATDREGNL (210 aa)). The SH3 5 domain maps to 1288 to 1351 (PPEKLFHVQR…YSSFLKPYNP (64 aa)). Over residues 1356–1365 (SDASVASHSS) the composition is skewed to low complexity. 2 disordered regions span residues 1356–1384 (SDAS…NSHS) and 1426–1514 (TGHP…GSSE). Residues 1426–1440 (TGHPETGPSTCSSDP) are compositionally biased toward polar residues. An SH3 6 domain is found at 1516–1579 (EGNQVYFAIY…PSNYIRKTEY (64 aa)).

In terms of assembly, binds DNM1 via its N-terminal SH3 domains. The C-terminal SH3 domain binds a complex containing actin, tubulin, Hsp70 and actin-regulatory proteins, such as ENAH, EVL, WIRE, CR16, WAVE1 and NAP1L1. Interacts with FASLG. Interacts (via SH3 domain 6) with WASL. Interacts (via SH3 domain 6) interacts with ENAH. Interacts (via C-terminal domain) with TJP1; required for the apical cell-cell junction localization of DNMBP.

Its subcellular location is the cytoplasm. It is found in the golgi apparatus. The protein localises to the golgi stack. The protein resides in the cytoskeleton. It localises to the synapse. Its subcellular location is the cell junction. Functionally, plays a critical role as a guanine nucleotide exchange factor (GEF) for CDC42 in several intracellular processes associated with the actin and microtubule cytoskeleton. Regulates the structure of apical junctions in epithelial cells. Participates in the normal lumenogenesis of epithelial cell cysts by regulating spindle orientation. Plays a role in ciliogenesis. May play a role in membrane trafficking between the cell surface and the Golgi. The polypeptide is Dynamin-binding protein (Mus musculus (Mouse)).